Here is a 445-residue protein sequence, read N- to C-terminus: Tubulin beta-1 chain (445 aa).

Glutamine 11, glutamate 69, serine 138, glycine 142, threonine 143, glycine 144, asparagine 204, and asparagine 226 together coordinate GTP. Glutamate 69 lines the Mg(2+) pocket. A disordered region spans residues 426–445 (QDATAEDEEEYEDEEEEMAA). Over residues 429-445 (TAEDEEEYEDEEEEMAA) the composition is skewed to acidic residues.

It belongs to the tubulin family. In terms of assembly, dimer of alpha and beta chains. A typical microtubule is a hollow water-filled tube with an outer diameter of 25 nm and an inner diameter of 15 nM. Alpha-beta heterodimers associate head-to-tail to form protofilaments running lengthwise along the microtubule wall with the beta-tubulin subunit facing the microtubule plus end conferring a structural polarity. Microtubules usually have 13 protofilaments but different protofilament numbers can be found in some organisms and specialized cells. Requires Mg(2+) as cofactor.

Its subcellular location is the cytoplasm. It is found in the cytoskeleton. Its function is as follows. Tubulin is the major constituent of microtubules, a cylinder consisting of laterally associated linear protofilaments composed of alpha- and beta-tubulin heterodimers. Microtubules grow by the addition of GTP-tubulin dimers to the microtubule end, where a stabilizing cap forms. Below the cap, tubulin dimers are in GDP-bound state, owing to GTPase activity of alpha-tubulin. The protein is Tubulin beta-1 chain (TUBB1) of Eleusine indica (Goosegrass).